The sequence spans 1722 residues: Signal-induced proliferation-associated 1-like protein 2 (1722 aa).

2 disordered regions span residues 1–29 (MSDPRPSQAEKHKLGRAAAKLKDPSRTMQ) and 44–72 (SMGPATLNTSSSSEGGGGGGGPANGTPAV). A compositionally biased stretch (gly residues) spans 57 to 66 (EGGGGGGGPA). 3 positions are modified to phosphoserine: S149, S380, and S384. The tract at residues 362–405 (ASAASQTPVPVGPAGGCESPLGSKEDLNSKENPDADEGDGKSND) is disordered. Residues 384–403 (SKEDLNSKENPDADEGDGKS) are compositionally biased toward basic and acidic residues. Residues 596 to 813 (LLKLDEQGLS…RTRQEYLKDL (218 aa)) form the Rap-GAP domain. The PDZ domain occupies 951-1027 (EMTLRRNGLG…VKVVIIQPHE (77 aa)). S1030 carries the post-translational modification Phosphoserine. 2 disordered regions span residues 1068 to 1246 (HRVP…FGSG) and 1331 to 1360 (GSMGDLSEVSSHSSGSQHSGSPSAHCSKST). Low complexity-rich tracts occupy residues 1091–1103 (LQCQPLLQQAQAA) and 1120–1131 (SSPSNQSSSSDP). Positions 1195 to 1218 (YKERVLQKDGSCKESPNKLSHIGD) are enriched in basic and acidic residues. Residues 1220 to 1237 (SCSSHSSSNTLSSNTSSN) are compositionally biased toward low complexity. Residue S1245 is modified to Phosphoserine. Over residues 1331 to 1355 (GSMGDLSEVSSHSSGSQHSGSPSAH) the composition is skewed to low complexity. Phosphoserine is present on residues S1461, S1472, S1478, S1488, S1549, S1552, and S1591. Residues 1652–1712 (STLTGKVNQL…ATAQLRKFTE (61 aa)) adopt a coiled-coil conformation.

The protein is Signal-induced proliferation-associated 1-like protein 2 (Sipa1l2) of Mus musculus (Mouse).